Here is a 375-residue protein sequence, read N- to C-terminus: Protein arginine N-methyltransferase 6 (375 aa).

Residues 1–38 form a disordered region; it reads MSQPKKRKLESGGGGEGGEGTEEEDGAEREAALERPRR. Phosphothreonine is present on Thr-21. Residues 28-38 are compositionally biased toward basic and acidic residues; the sequence is EREAALERPRR. An asymmetric dimethylarginine; by autocatalysis mark is found at Arg-29, Arg-35, and Arg-37. Positions 44–374 constitute an SAM-dependent MTase PRMT-type domain; sequence DQLYYECYSD…EEKTKDFAME (331 aa). Positions 57, 66, 90, 112, and 141 each coordinate S-adenosyl-L-methionine. Catalysis depends on residues Glu-155 and Glu-164.

This sequence belongs to the class I-like SAM-binding methyltransferase superfamily. Protein arginine N-methyltransferase family. PRMT6 subfamily. In terms of assembly, interacts with EPB41L3 and NCOA1. As to quaternary structure, (Microbial infection) Interacts with (and methylates) HIV-1 Tat, Rev and Nucleocapsid protein p7 (NC). (Microbial infection) Interacts with human cytomegalovirus protein UL69. Post-translationally, automethylation enhances its stability and antiretroviral activity. As to expression, highly expressed in kidney and testis.

The protein resides in the nucleus. It catalyses the reaction L-arginyl-[protein] + 2 S-adenosyl-L-methionine = N(omega),N(omega)-dimethyl-L-arginyl-[protein] + 2 S-adenosyl-L-homocysteine + 2 H(+). Functionally, arginine methyltransferase that can catalyze the formation of both omega-N monomethylarginine (MMA) and asymmetrical dimethylarginine (aDMA), with a strong preference for the formation of aDMA. Preferentially methylates arginyl residues present in a glycine and arginine-rich domain and displays preference for monomethylated substrates. Specifically mediates the asymmetric dimethylation of histone H3 'Arg-2' to form H3R2me2a. H3R2me2a represents a specific tag for epigenetic transcriptional repression and is mutually exclusive with methylation on histone H3 'Lys-4' (H3K4me2 and H3K4me3). Acts as a transcriptional repressor of various genes such as HOXA2, THBS1 and TP53. Repression of TP53 blocks cellular senescence. Also methylates histone H2A and H4 'Arg-3' (H2AR3me and H4R3me, respectively). Acts as a regulator of DNA base excision during DNA repair by mediating the methylation of DNA polymerase beta (POLB), leading to the stimulation of its polymerase activity by enhancing DNA binding and processivity. Methylates HMGA1. Regulates alternative splicing events. Acts as a transcriptional coactivator of a number of steroid hormone receptors including ESR1, ESR2, PGR and NR3C1. Promotes fasting-induced transcriptional activation of the gluconeogenic program through methylation of the CRTC2 transcription coactivator. May play a role in innate immunity against HIV-1 in case of infection by methylating and impairing the function of various HIV-1 proteins such as Tat, Rev and Nucleocapsid protein p7 (NC). Methylates GPS2, protecting GPS2 from ubiquitination and degradation. Methylates SIRT7, inhibiting SIRT7 histone deacetylase activity and promoting mitochondria biogenesis. The chain is Protein arginine N-methyltransferase 6 (PRMT6) from Homo sapiens (Human).